The chain runs to 518 residues: Vesicular inhibitory amino acid transporter (518 aa).

Topologically, residues 1 to 125 are cytoplasmic; sequence MATLIRSKLS…WNVTNAIQGM (125 aa). A helical membrane pass occupies residues 126–146; that stretch reads FVLGLPYAILHGGYLGLFLII. Residues 147–197 are Lumenal, vesicle-facing; that stretch reads FAAVVCCYTGKILIACLYEENEDGETVRVRDSYVDIANACCAPRFPKLGGR. A helical transmembrane segment spans residues 198–218; the sequence is VVNVAQIIELVMTCILYVVVS. Residues 219–258 lie on the Cytoplasmic side of the membrane; that stretch reads GNLMYNSFPNLPISQKSWSIMATAVLLPCAFLKNLKAVSK. The chain crosses the membrane as a helical span at residues 259–279; sequence FSLLCTVAHFVINILVIAYCL. At 280–298 the chain is on the lumenal, vesicle side; that stretch reads SRARDWAWDKVKFYIDVKK. The chain crosses the membrane as a helical span at residues 299–319; sequence FPISIGIIVFSYTSQIFLPSL. At 320–334 the chain is on the cytoplasmic side; that stretch reads EGNMQSPREFHCMMN. A helical transmembrane segment spans residues 335–355; sequence WTHIAACILKGLFALVAYLTW. Topologically, residues 356 to 376 are lumenal, vesicle; sequence ADETKEVITDNLPSTIRAVVN. A helical membrane pass occupies residues 377–397; it reads LFLVSKALLSYPLPFFAAVEV. Residues 398–431 are Cytoplasmic-facing; the sequence is LEKSLFQEGARAFFPNCYGGDGRLKSWGLTLRCA. A helical membrane pass occupies residues 432-452; that stretch reads LVVFTLLMAIYVPHFALLMGL. At 453-454 the chain is on the lumenal, vesicle side; that stretch reads TG. Residues 455 to 475 form a helical membrane-spanning segment; that stretch reads SLTGAGLCFLLPSLFHLKLMW. The Cytoplasmic segment spans residues 476–482; it reads RQLLWHQ. Residues 483–503 traverse the membrane as a helical segment; the sequence is VFFDVSIFVIGSICSVSGFVH. Over 504–518 the chain is Lumenal, vesicle; sequence SLEGLIEAYAYNIED.

The protein belongs to the amino acid/polyamine transporter 2 family. In terms of tissue distribution, initially expressed in late neurula stages in the anterior spinal cord. By early tailbud stages, expression extends posteriorly along the entire developing spinal cord and appears in the hindbrain. In late tailbud embryos, expressed in the forebrain, midbrain, hindbrain, spinal cord and retina. In swimming tadpoles, expressed in an extended and more intense pattern including interneurons.

The protein resides in the cytoplasmic vesicle membrane. Its subcellular location is the presynapse. The enzyme catalyses 4-aminobutanoate(out) + n H(+)(in) = 4-aminobutanoate(in) + n H(+)(out). It catalyses the reaction glycine(out) + n H(+)(in) = glycine(in) + n H(+)(out). It carries out the reaction beta-alanine(out) + n H(+)(in) = beta-alanine(in) + n H(+)(out). Its function is as follows. Antiporter that exchanges vesicular protons for cytosolic 4-aminobutanoate or to a lesser extend glycine, thus allowing their secretion from nerve terminals. The transport is equally dependent on the chemical and electrical components of the proton gradient. May also transport beta-alanine. Acidification of GABAergic synaptic vesicles is a prerequisite for 4-aminobutanoate uptake. In Xenopus laevis (African clawed frog), this protein is Vesicular inhibitory amino acid transporter.